Reading from the N-terminus, the 77-residue chain is Translation initiation factor IF-1, chloroplastic (77 aa).

Residues 1-71 (MKEQKLIHEG…TRGRIIYRLR (71 aa)) enclose the S1-like domain.

Belongs to the IF-1 family. In terms of assembly, component of the 30S ribosomal translation pre-initiation complex which assembles on the 30S ribosome in the order IF-2 and IF-3, IF-1 and N-formylmethionyl-tRNA(fMet); mRNA recruitment can occur at any time during PIC assembly.

The protein localises to the plastid. It localises to the chloroplast. Its function is as follows. One of the essential components for the initiation of protein synthesis. Stabilizes the binding of IF-2 and IF-3 on the 30S subunit to which N-formylmethionyl-tRNA(fMet) subsequently binds. Helps modulate mRNA selection, yielding the 30S pre-initiation complex (PIC). Upon addition of the 50S ribosomal subunit IF-1, IF-2 and IF-3 are released leaving the mature 70S translation initiation complex. In Liriodendron tulipifera (Tuliptree), this protein is Translation initiation factor IF-1, chloroplastic.